Here is a 578-residue protein sequence, read N- to C-terminus: Leucine-rich repeat-containing protein 15 (578 aa).

The first 21 residues, 1-21, serve as a signal peptide directing secretion; sequence MPLKHYLLLLVGCQAWALGLA. The 32-residue stretch at 22–53 folds into the LRRNT domain; the sequence is YYGCPSECTCSRASQVECTGARIVAMPTPLPW. Over 22-535 the chain is Extracellular; the sequence is YYGCPSECTC…TWGMTEAQSG (514 aa). 15 LRR repeats span residues 54 to 75, 78 to 99, 102 to 123, 126 to 147, 150 to 171, 174 to 195, 198 to 219, 222 to 243, 246 to 267, 270 to 291, 294 to 315, 318 to 339, 342 to 363, 366 to 387, and 390 to 411; these read NAMS…LFLN, ALIA…AFRN, SLRY…VFQD, NLES…QFSQ, NLRE…AFDH, GLTK…LFQH, NLQV…TFDA, NLQE…LFHN, NLQR…IFMQ, QLNK…VFGP, NLRE…TFSH, QLQV…AFNG, NLRE…VFRS, NLQN…IFAN, and GLTT…IFDH. A glycan (N-linked (GlcNAc...) asparagine) is linked at N75. The N-linked (GlcNAc...) asparagine glycan is linked to N369. An LRRCT domain is found at 423–473; sequence NPWRCDSDILPLHNWLLLNRARLGTDTLPVCSSPANVRGQSLVIININFPG. Positions 476–500 are disordered; the sequence is VQGPETPEVPSYPDTPSYPDTTSVS. A helical transmembrane segment spans residues 536–556; it reads LAIAAIVIGIIALACSLAACI. Topologically, residues 557-578 are cytoplasmic; that stretch reads CCCCCKKRSQAVLMQMKAPNEC.

It localises to the cell membrane. This Rattus norvegicus (Rat) protein is Leucine-rich repeat-containing protein 15 (Lrrc15).